Here is a 486-residue protein sequence, read N- to C-terminus: Probable glucan endo-1,3-beta-glucosidase eglC (486 aa).

Residues 1–18 form the signal peptide; the sequence is MQLTQLLALALSLATSEA. Asn-84 carries an N-linked (GlcNAc...) asparagine glycan. Glu-128 (proton donor) is an active-site residue. Residue Asn-183 is glycosylated (N-linked (GlcNAc...) asparagine). Glu-239 functions as the Nucleophile in the catalytic mechanism. 4 N-linked (GlcNAc...) asparagine glycosylation sites follow: Asn-315, Asn-386, Asn-396, and Asn-404. Residues 330–458 form a disordered region; sequence AAAGGVAGGS…SSGAASPSST (129 aa). Composition is skewed to low complexity over residues 341-404 and 413-424; these read GSAS…HGSN and SVSNVSPSKSSS. Positions 430 to 442 are enriched in polar residues; sequence AATSMGASPSSVG. The span at 445–458 shows a compositional bias: low complexity; that stretch reads GPSKSSGAASPSST. A lipid anchor (GPI-anchor amidated glycine) is attached at Gly-463. The propeptide at 464–486 is removed in mature form; sequence AATSVSAPVVHVVLLALMMVIAA.

It belongs to the glycosyl hydrolase 17 family. Post-translationally, the GPI-anchor is attached to the protein in the endoplasmic reticulum and serves to target the protein to the cell surface. There, the glucosamine-inositol phospholipid moiety is cleaved off and the GPI-modified mannoprotein is covalently attached via its lipidless GPI glycan remnant to the 1,6-beta-glucan of the outer cell wall layer.

It is found in the cell membrane. The protein resides in the secreted. It localises to the cell wall. The enzyme catalyses Hydrolysis of (1-&gt;3)-beta-D-glucosidic linkages in (1-&gt;3)-beta-D-glucans.. Functionally, glucanases play a role in cell expansion during growth, in cell-cell fusion during mating, and in spore release during sporulation. This enzyme may be involved in beta-glucan degradation and also function biosynthetically as a transglycosylase. The protein is Probable glucan endo-1,3-beta-glucosidase eglC (eglC) of Aspergillus terreus (strain NIH 2624 / FGSC A1156).